Here is a 415-residue protein sequence, read N- to C-terminus: Glucose-1-phosphate adenylyltransferase (415 aa).

Residues Tyr-100, Gly-165, Glu-182 to Lys-183, and Ser-200 each bind alpha-D-glucose 1-phosphate.

It belongs to the bacterial/plant glucose-1-phosphate adenylyltransferase family. In terms of assembly, homotetramer.

It catalyses the reaction alpha-D-glucose 1-phosphate + ATP + H(+) = ADP-alpha-D-glucose + diphosphate. Its pathway is glycan biosynthesis; glycogen biosynthesis. Functionally, involved in the biosynthesis of ADP-glucose, a building block required for the elongation reactions to produce glycogen. Catalyzes the reaction between ATP and alpha-D-glucose 1-phosphate (G1P) to produce pyrophosphate and ADP-Glc. In Bifidobacterium animalis subsp. lactis (strain AD011), this protein is Glucose-1-phosphate adenylyltransferase.